We begin with the raw amino-acid sequence, 261 residues long: RING finger and CHY zinc finger domain-containing protein 1 (261 aa).

The CHY-type zinc-finger motif lies at 13–80 (LAQGPRGCEH…AQQTCEDCST (68 aa)). Cys20, His22, Cys33, Cys34, Cys40, Cys43, His44, His50, Cys62, Cys65, Cys75, Cys78, Cys87, Cys90, His101, Cys102, Cys105, Cys108, His118, Cys119, Cys122, Cys125, His134, and Cys136 together coordinate Zn(2+). Residues 82-144 (FGEYYCSICH…KCIENVSRQN (63 aa)) form a CTCHY-type zinc finger. The RING-type zinc finger occupies 145-189 (CPICLEDIHTSRVVAHVLPCGHLLHRTCYEEMLKEGYRCPLCMHS).

As to quaternary structure, monomer and homodimer. Interacts with AR, MDM2, KAT5, PLAG1, PLAGL2, COPE, UBE2D2 and GORAB/NTKLBP1. Subject to ubiquitination and proteasomal degradation. Interaction with PLAGL2 or KAT5 enhances protein stability. As to expression, detected in testis, liver, kidney and heart.

The protein localises to the nucleus. Its subcellular location is the nucleus speckle. The protein resides in the cytoplasm. The catalysed reaction is S-ubiquitinyl-[E2 ubiquitin-conjugating enzyme]-L-cysteine + [acceptor protein]-L-lysine = [E2 ubiquitin-conjugating enzyme]-L-cysteine + N(6)-ubiquitinyl-[acceptor protein]-L-lysine.. Its pathway is protein modification; protein ubiquitination. Its function is as follows. E3 ubiquitin-protein ligase that mediates ubiquitination of target proteins, including p53/TP53, TP73, HDAC1 and CDKN1B. Mediates ubiquitination and degradation of p53/TP53; preferentially acts on tetrameric p53/TP53. Catalyzes monoubiquitinates the translesion DNA polymerase POLH. Involved in the ribosome-associated quality control (RQC) pathway, which mediates the extraction of incompletely synthesized nascent chains from stalled ribosomes: RCHY1 acts downstream of NEMF and recognizes CAT tails associated with stalled nascent chains, leading to their ubiquitination and degradation. This Mus musculus (Mouse) protein is RING finger and CHY zinc finger domain-containing protein 1 (Rchy1).